Consider the following 158-residue polypeptide: uncharacterized protein (158 aa).

This is an uncharacterized protein from Saccharolobus islandicus (Sulfolobus islandicus).